The primary structure comprises 1138 residues: Protein RECOGNITION OF PERONOSPORA PARASITICA 7 (1138 aa).

In terms of domain architecture, NB-ARC spans 166–422 (EENVKKLVGY…CNYVLSLSFE (257 aa)). 189 to 196 (GMGGLGKT) is an ATP binding site. LRR repeat units follow at residues 544–565 (QYPTTLHVEKDINNPKLRSLVV), 566–581 (VTLGSWNMAGSSFTRL), 582–606 (ELLRVLDLVQAKLKGGKLASCIGKL), 607–631 (IHLRYLSLEYAEVTHIPYSLGNLKL), 655–680 (MQELRYLALPSLIERKTKLELSNLVK), 681–705 (LETLENFSTKNSSLEDLRGMVRLRT), 707–726 (TIELIEETSLETLAASIGGL), 727–752 (KYLEKLEIDDLGSKMRTKEAGIVFDF), 754–774 (HLKRLRLELYMPRLSKEQHFP), 775–797 (SHLTTLYLQHCRLEEDPMPILEK), 798–825 (LLQLKELELGHKSFSGKKMVCSSCGFPQ), 847–871 (MPLLLTLNIFDCRKLKQLPDEHLPS), 873–893 (LTAISLKKCGLEDPIPTLERL), 894–918 (VHLKELSLSELCGRIMVCTGGGFPQ), 940–963 (MPRLHTLEIRRCLKLKKLPNGFPQ), 1028–1050 (LEKLLHLKNVSLFQSFSGKRMVC), 1055–1078 (FPQLQKLSIREIEWEEWIVEQGSM), 1079–1103 (PLLHTLYIGVCPNLKELPDGLRFIY), and 1115–1138 (KKRLSEGGEDYYKVQHIPSVEFDD).

This sequence belongs to the disease resistance NB-LRR family.

In terms of biological role, disease resistance protein required for incompatible interactions with avirulent strains of Hyaloperonospora arabidopsidis (downy mildew), isolate Hpa-Hiks1 in cv. Columbia. This Arabidopsis thaliana (Mouse-ear cress) protein is Protein RECOGNITION OF PERONOSPORA PARASITICA 7.